The primary structure comprises 104 residues: MAAKIRRQDEVIVLAGKDQGKRGKVSQVLTTGKLIVEGINLVKKHQKPNPQLGVAGGIVEQEAPIQASNVAIFNSATGKADRVGFRFEDGKKVRFFKSNSELVK.

It belongs to the universal ribosomal protein uL24 family. As to quaternary structure, part of the 50S ribosomal subunit.

In terms of biological role, one of two assembly initiator proteins, it binds directly to the 5'-end of the 23S rRNA, where it nucleates assembly of the 50S subunit. Functionally, one of the proteins that surrounds the polypeptide exit tunnel on the outside of the subunit. This chain is Large ribosomal subunit protein uL24, found in Shewanella piezotolerans (strain WP3 / JCM 13877).